Reading from the N-terminus, the 567-residue chain is Fanconi anemia group C protein homolog (567 aa).

As to quaternary structure, belongs to the multisubunit FA complex composed of FANCA, FANCB, FANCC, FANCE, FANCF, FANCG, FANCL/PHF9 and FANCM. This complex may also include HSP70. Interacts with ZBTB32. Upon IFNG induction, interacts with STAT1. Interacts with CDK1. Interacts with EIF2AK2.

It localises to the nucleus. It is found in the cytoplasm. In terms of biological role, DNA repair protein that may operate in a postreplication repair or a cell cycle checkpoint function. May be implicated in interstrand DNA cross-link repair and in the maintenance of normal chromosome stability. Upon IFNG induction, may facilitate STAT1 activation by recruiting STAT1 to IFNGR1. This chain is Fanconi anemia group C protein homolog (FANCC), found in Bos taurus (Bovine).